The following is a 31-amino-acid chain: Scolopendra 20566.01 Da toxin (31 aa).

This sequence belongs to the CRISP family. Venom allergen 5-like subfamily. Contains 3 disulfide bonds. As to expression, expressed by the venom gland.

The protein resides in the secreted. This is Scolopendra 20566.01 Da toxin from Scolopendra angulata (Barbados giant red centipede).